Here is a 167-residue protein sequence, read N- to C-terminus: uncharacterized protein (167 aa).

To A.aeolicus aq_328.

This is an uncharacterized protein from Aquifex aeolicus (strain VF5).